A 155-amino-acid polypeptide reads, in one-letter code: Endoribonuclease YbeY (155 aa).

The Zn(2+) site is built by H117, H121, and H127.

The protein belongs to the endoribonuclease YbeY family. Requires Zn(2+) as cofactor.

Its subcellular location is the cytoplasm. Its function is as follows. Single strand-specific metallo-endoribonuclease involved in late-stage 70S ribosome quality control and in maturation of the 3' terminus of the 16S rRNA. This is Endoribonuclease YbeY from Psychrobacter cryohalolentis (strain ATCC BAA-1226 / DSM 17306 / VKM B-2378 / K5).